Consider the following 332-residue polypeptide: uncharacterized protein (332 aa).

This sequence belongs to the herpesviridae BBRF2 family.

This is an uncharacterized protein from Bos taurus (Bovine).